The primary structure comprises 417 residues: MSMNFVTFNQDYSYLAVGTSKGFRIFTTDPFGKSYETKEGNIAILEMLFSTSLVAVILSPRRLQIMNTKRQSVICELTFPTTVLAIRLNRKRLVIVLEDQIYIYDIQTMKLVYTIETSPNPNAICALAPSSDNCYLAYPLPQKAPPPSFSPPSHGPPSNTHIPPTSGEVLIFDAYKLEAVNVVEAHKSPLSFLALNSEGTLLATASDKGTIIRVFSVPAAHKLYQFRRGSMPSRIYSMSFNITSTLLCVSSATETIHIFKLGQQQGLSKTSSPSRKLESSRGSGDESAVESASSEMSSRKHNGTFMGMIRRTSQNVGNSFAATVGGYLPKGVTEMWEPERDFAWIKLPKSNGGNGGSGPVRSVVAMSSNTPQVMVVTSEGNFYVFNIDLSKGGEGTLVKQYSVLDSSDRMGSTDLDY.

WD repeat units lie at residues 1-36 (MSMNFVTFNQDYSYLAVGTSKGFRIFTTDPFGKSYE), 76-114 (ELTFPTTVLAIRLNRKRLVIVLEDQIYIYDIQTMKLVYT), 185-225 (AHKS…KLYQ), and 230-269 (SMPSRIYSMSFNITSTLLCVSSATETIHIFKLGQQQGLSK). The short motif at 226-230 (FRRGS) is the L/FRRG motif element. The tract at residues 267–300 (LSKTSSPSRKLESSRGSGDESAVESASSEMSSRK) is disordered. The segment covering 285–296 (DESAVESASSEM) has biased composition (low complexity). WD repeat units follow at residues 300 to 346 (KHNG…AWIK) and 355 to 395 (GGSG…GGEG).

This sequence belongs to the WD repeat PROPPIN family. In terms of assembly, component of the PI(3,5)P2 regulatory complex.

The protein resides in the preautophagosomal structure membrane. Its subcellular location is the vacuole membrane. It is found in the endosome membrane. The PI(3,5)P2 regulatory complex regulates both the synthesis and turnover of phosphatidylinositol 3,5-bisphosphate (PtdIns(3,5)P2). Necessary for proper vacuole morphology. Plays an important role in osmotically-induced vacuole fragmentation. Required for cytoplasm to vacuole transport (Cvt) vesicle formation, pexophagy and starvation-induced autophagy. Involved in correct ATG9 trafficking to the pre-autophagosomal structure. Might also be involved in premeiotic DNA replication. The chain is Autophagy-related protein 18 (ATG18) from Coccidioides immitis (strain RS) (Valley fever fungus).